A 901-amino-acid chain; its full sequence is Valine--tRNA ligase (901 aa).

The tract at residues 1–37 (MLPGCYTHRLNMSDTQDPPQDESTTDESADALDGEYD) is disordered. Residues 19–35 (PQDESTTDESADALDGE) show a composition bias toward acidic residues. A 'HIGH' region motif is present at residues 72 to 82 (PTVSGNLHMGH). Positions 572 to 576 (AMSKS) match the 'KMSKS' region motif. Lys575 lines the ATP pocket.

It belongs to the class-I aminoacyl-tRNA synthetase family. ValS type 2 subfamily.

It localises to the cytoplasm. The enzyme catalyses tRNA(Val) + L-valine + ATP = L-valyl-tRNA(Val) + AMP + diphosphate. Its function is as follows. Catalyzes the attachment of valine to tRNA(Val). As ValRS can inadvertently accommodate and process structurally similar amino acids such as threonine, to avoid such errors, it has a 'posttransfer' editing activity that hydrolyzes mischarged Thr-tRNA(Val) in a tRNA-dependent manner. In Haloarcula marismortui (strain ATCC 43049 / DSM 3752 / JCM 8966 / VKM B-1809) (Halobacterium marismortui), this protein is Valine--tRNA ligase.